The chain runs to 595 residues: DNA damage-binding protein CMR1 (595 aa).

The interval 20 to 79 (ALLDSLGLDPAGASSPFGSSPAPTSNKTKPKPKPAPKKRKAAAVIAVDEGPRRRSGRIAG) is disordered. The segment covering 29-46 (PAGASSPFGSSPAPTSNK) has biased composition (low complexity). Residues 47 to 60 (TKPKPKPAPKKRKA) show a composition bias toward basic residues. WD repeat units follow at residues 185–226 (VTNE…MEKP), 255–297 (HAKN…ELFS), 300–339 (DEDL…RESG), and 349–389 (GRGA…SISS). Positions 397–429 (AIEEEEEGTSTLSGQSSSLPHDTHPTRESDYST) are disordered. Over residues 405-415 (TSTLSGQSSSL) the composition is skewed to low complexity. Basic and acidic residues predominate over residues 417–426 (HDTHPTRESD). 3 WD repeats span residues 448–487 (QHGK…SLVD), 519–556 (LRAQ…VGLW), and 558–595 (DDVT…GDHI).

Belongs to the WD repeat DDB2/WDR76 family.

Its function is as follows. DNA-binding protein that binds to both single- and double-stranded DNA. Binds preferentially to UV-damaged DNA. May be involved in DNA-metabolic processes. This chain is DNA damage-binding protein CMR1, found in Cryptococcus neoformans var. neoformans serotype D (strain B-3501A) (Filobasidiella neoformans).